A 510-amino-acid chain; its full sequence is MFPEKFLWGVAQSGFQFEMGDKLRRNIDTNTDWWHWVRDKTNIEKGLVSGDLPEEGINNYELYEKDHEIARKLGLNAYRIGIEWSRIFPWPTTFIDVDYSYNESYNLIEDVKITKDTLEELDEIANKREVAYYRSVINSLRSKGFKVIVNLNHFTLPYWLHDPIEARERALTNKRNGWVNPRTVIEFAKYAAYIAYKFGDIVDMWSTFNEPMVVVELGYLAPYSGFPPGVLNPEAAKLAILHMINAHALAYRQIKKFDTEKADKDSKEPAEVGIIYNNIGVAYPKDPNDSKDVKAAENDNFFHSGLFFEAIHKGKLNIEFDGETFIDAPYLKGNDWIGVNYYTREVVTYQEPMFPSIPLITFKGVQGYGYACRPGTLSKDDRPVSDIGWELYPEGMYDSIVEAHKYGVPVYVTENGIADSKDILRPYYIASHIKMTEKAFEDGYEVKGYFHWALTDNFEWALGFRMRFGLYEVNLITKERIPREKSVSIFREIVANNGVTKKIEEELLRG.

Residue Glu210 is the Proton donor of the active site. Residue Glu414 is the Nucleophile of the active site.

The protein belongs to the glycosyl hydrolase 1 family.

It catalyses the reaction Hydrolysis of terminal non-reducing beta-D-galactose residues in beta-D-galactosides.. The protein is Beta-galactosidase of Pyrococcus woesei.